The sequence spans 255 residues: 5-oxoprolinase subunit A (255 aa).

Belongs to the LamB/PxpA family. In terms of assembly, forms a complex composed of PxpA, PxpB and PxpC.

It catalyses the reaction 5-oxo-L-proline + ATP + 2 H2O = L-glutamate + ADP + phosphate + H(+). Functionally, catalyzes the cleavage of 5-oxoproline to form L-glutamate coupled to the hydrolysis of ATP to ADP and inorganic phosphate. The protein is 5-oxoprolinase subunit A of Rhodopseudomonas palustris (strain BisA53).